The primary structure comprises 229 residues: Enolase-phosphatase E1 (229 aa).

It belongs to the HAD-like hydrolase superfamily. MasA/MtnC family. Monomer. Requires Mg(2+) as cofactor.

It carries out the reaction 5-methylsulfanyl-2,3-dioxopentyl phosphate + H2O = 1,2-dihydroxy-5-(methylsulfanyl)pent-1-en-3-one + phosphate. It functions in the pathway amino-acid biosynthesis; L-methionine biosynthesis via salvage pathway; L-methionine from S-methyl-5-thio-alpha-D-ribose 1-phosphate: step 3/6. It participates in amino-acid biosynthesis; L-methionine biosynthesis via salvage pathway; L-methionine from S-methyl-5-thio-alpha-D-ribose 1-phosphate: step 4/6. Bifunctional enzyme that catalyzes the enolization of 2,3-diketo-5-methylthiopentyl-1-phosphate (DK-MTP-1-P) into the intermediate 2-hydroxy-3-keto-5-methylthiopentenyl-1-phosphate (HK-MTPenyl-1-P), which is then dephosphorylated to form the acireductone 1,2-dihydroxy-3-keto-5-methylthiopentene (DHK-MTPene). The chain is Enolase-phosphatase E1 from Yersinia pestis (strain Pestoides F).